The chain runs to 109 residues: Nucleoid-associated protein APL_0075 (109 aa).

Positions 1 to 21 (MFGKGGLGGLMKQAQQMQERM) are disordered. Over residues 10–19 (LMKQAQQMQE) the composition is skewed to low complexity.

This sequence belongs to the YbaB/EbfC family. In terms of assembly, homodimer.

Its subcellular location is the cytoplasm. It localises to the nucleoid. Functionally, binds to DNA and alters its conformation. May be involved in regulation of gene expression, nucleoid organization and DNA protection. This chain is Nucleoid-associated protein APL_0075, found in Actinobacillus pleuropneumoniae serotype 5b (strain L20).